Reading from the N-terminus, the 397-residue chain is Dimethyladenosine transferase 2, mitochondrial (397 aa).

A mitochondrion-targeting transit peptide spans 1-44; that stretch reads MRGLAMRLPPRLALSVLAGRGPSCILGSGAATRKDWQERNRRSF. 3 residues coordinate S-adenosyl-L-methionine: Ile75, Glu124, and Asp150. Positions 329–330 are DNA-binding; that stretch reads KR.

It belongs to the class I-like SAM-binding methyltransferase superfamily. rRNA adenine N(6)-methyltransferase family. KsgA subfamily. In terms of assembly, homodimer. Component of the mitochondrial transcription initiation complex, composed at least of TFB2M, TFAM and POLRMT. In this complex TFAM recruits POLRMT to the promoter whereas TFB2M induces structural changes in POLRMT to enable promoter opening and trapping of the DNA non-template strand. Interacts with mitochondrial RNA polymerase POLRMT. Interacts with TFAM.

The protein resides in the mitochondrion. It catalyses the reaction adenosine in rRNA + S-adenosyl-L-methionine = N(6)-methyladenosine in rRNA + S-adenosyl-L-homocysteine + H(+). In terms of biological role, S-adenosyl-L-methionine-dependent rRNA methyltransferase which may methylate two specific adjacent adenosines in the loop of a conserved hairpin near the 3'-end of 12S mitochondrial rRNA. Component of the mitochondrial transcription initiation complex, composed at least of TFB2M, TFAM and POLRMT that is required for basal transcription of mitochondrial DNA. In this complex TFAM recruits POLRMT to a specific promoter whereas TFB2M induces structural changes in POLRMT to enable promoter opening and trapping of the DNA non-template strand. Stimulates transcription independently of the methyltransferase activity. The polypeptide is Dimethyladenosine transferase 2, mitochondrial (Rattus norvegicus (Rat)).